We begin with the raw amino-acid sequence, 238 residues long: uncharacterized protein (238 aa).

The N-terminal stretch at 1-19 (MKINLFFVFLFELLHFVAA) is a signal peptide. Residues 20–197 (YSCEGDESAA…LALYGHLSQK (178 aa)) are Lumenal-facing. The helical transmembrane segment at 198–216 (YTPLGMNVAIFGISAYIMY) threads the bilayer. The Cytoplasmic portion of the chain corresponds to 217 to 238 (RSSKKAKQKQAAAAAAAAAKKK).

The protein resides in the endoplasmic reticulum membrane. This is an uncharacterized protein from Schizosaccharomyces pombe (strain 972 / ATCC 24843) (Fission yeast).